The chain runs to 439 residues: Serine/threonine-protein kinase 2 (439 aa).

Positions 87–439 (NDDFYHISTG…IFSDWINGGN (353 aa)) constitute a Protein kinase domain. ATP contacts are provided by residues 93 to 101 (ISTGGYGIV) and Lys-117. Asp-307 functions as the Proton acceptor in the catalytic mechanism.

It belongs to the protein kinase superfamily. Ser/Thr protein kinase family. Poxviruses subfamily. Post-translationally, phosphorylated in vivo. Autophosphorylated in vitro.

It localises to the host endoplasmic reticulum. The protein resides in the host endoplasmic reticulum-Golgi intermediate compartment. It carries out the reaction L-seryl-[protein] + ATP = O-phospho-L-seryl-[protein] + ADP + H(+). The enzyme catalyses L-threonyl-[protein] + ATP = O-phospho-L-threonyl-[protein] + ADP + H(+). Functionally, essential serine-protein kinase involved in the early stage of virion morphogenesis. In Vaccinia virus (strain Copenhagen) (VACV), this protein is Serine/threonine-protein kinase 2 (OPG054).